Reading from the N-terminus, the 120-residue chain is NAD(P)H-quinone oxidoreductase subunit 3 (120 aa).

3 consecutive transmembrane segments (helical) span residues 1-21 (MFVL…SLVP), 64-84 (MFAL…PWAV), and 89-109 (LGLL…VALV).

It belongs to the complex I subunit 3 family. NDH-1 can be composed of about 15 different subunits; different subcomplexes with different compositions have been identified which probably have different functions.

The protein localises to the cellular thylakoid membrane. It catalyses the reaction a plastoquinone + NADH + (n+1) H(+)(in) = a plastoquinol + NAD(+) + n H(+)(out). The enzyme catalyses a plastoquinone + NADPH + (n+1) H(+)(in) = a plastoquinol + NADP(+) + n H(+)(out). Functionally, NDH-1 shuttles electrons from an unknown electron donor, via FMN and iron-sulfur (Fe-S) centers, to quinones in the respiratory and/or the photosynthetic chain. The immediate electron acceptor for the enzyme in this species is believed to be plastoquinone. Couples the redox reaction to proton translocation, and thus conserves the redox energy in a proton gradient. Cyanobacterial NDH-1 also plays a role in inorganic carbon-concentration. In Nostoc punctiforme (strain ATCC 29133 / PCC 73102), this protein is NAD(P)H-quinone oxidoreductase subunit 3.